We begin with the raw amino-acid sequence, 326 residues long: Phospho-N-acetylmuramoyl-pentapeptide-transferase (326 aa).

The next 9 helical transmembrane spans lie at 3 to 23, 51 to 71, 79 to 99, 115 to 135, 138 to 158, 169 to 189, 195 to 215, 221 to 243, and 306 to 326; these read ISIS…PAFI, TMGG…LALF, VGMI…DDFL, LALQ…GGDM, VFSY…FWLV, GIDG…GVIA, MDIL…FVFN, VFMG…MALH, and FFFW…LYLM.

Belongs to the glycosyltransferase 4 family. MraY subfamily. Mg(2+) is required as a cofactor.

The protein localises to the cell membrane. It catalyses the reaction UDP-N-acetyl-alpha-D-muramoyl-L-alanyl-gamma-D-glutamyl-L-lysyl-D-alanyl-D-alanine + di-trans,octa-cis-undecaprenyl phosphate = Mur2Ac(oyl-L-Ala-gamma-D-Glu-L-Lys-D-Ala-D-Ala)-di-trans,octa-cis-undecaprenyl diphosphate + UMP. It functions in the pathway cell wall biogenesis; peptidoglycan biosynthesis. Catalyzes the initial step of the lipid cycle reactions in the biosynthesis of the cell wall peptidoglycan: transfers peptidoglycan precursor phospho-MurNAc-pentapeptide from UDP-MurNAc-pentapeptide onto the lipid carrier undecaprenyl phosphate, yielding undecaprenyl-pyrophosphoryl-MurNAc-pentapeptide, known as lipid I. The protein is Phospho-N-acetylmuramoyl-pentapeptide-transferase of Streptococcus pneumoniae (strain ATCC 700669 / Spain 23F-1).